Consider the following 188-residue polypeptide: Large ribosomal subunit protein eL18 (188 aa).

Residue Lys-119 forms a Glycyl lysine isopeptide (Lys-Gly) (interchain with G-Cter in SUMO2) linkage. A Phosphoserine modification is found at Ser-130. A disordered region spans residues 150–188 (RHFGKAPGTPHSHTKPYVRSKGRKFERARGRRASRGYKN). Residue Thr-158 is modified to Phosphothreonine. Composition is skewed to basic residues over residues 161 to 171 (SHTKPYVRSKG) and 178 to 188 (RGRRASRGYKN). Lys-164 participates in a covalent cross-link: Glycyl lysine isopeptide (Lys-Gly) (interchain with G-Cter in SUMO2).

It belongs to the eukaryotic ribosomal protein eL18 family. Component of the large ribosomal subunit.

Its subcellular location is the cytoplasm. It localises to the cytosol. The protein resides in the rough endoplasmic reticulum. Its function is as follows. Component of the large ribosomal subunit. The ribosome is a large ribonucleoprotein complex responsible for the synthesis of proteins in the cell. In Rattus norvegicus (Rat), this protein is Large ribosomal subunit protein eL18 (Rpl18).